A 773-amino-acid polypeptide reads, in one-letter code: Polyribonucleotide nucleotidyltransferase (773 aa).

Positions 490 and 496 each coordinate Mg(2+). One can recognise a KH domain in the interval 557–616 (PKIDTITIPVDKIKVVIGKGGEQIDKIIAETGVKIDIDDEGLCSIFSSDQAAIDRAKEII). The S1 motif domain maps to 626 to 694 (GEIYDAKVVR…DKGRVDASMR (69 aa)). Residues 700–721 (PEGYVEPERKPRERRENGDRRK) show a composition bias toward basic and acidic residues. A disordered region spans residues 700–773 (PEGYVEPERK…FPELSTKKPE (74 aa)). A compositionally biased stretch (low complexity) spans 739-748 (RNNQGNKVGN). Basic and acidic residues predominate over residues 751–773 (FELRERKSHIDEEFPELSTKKPE).

The protein belongs to the polyribonucleotide nucleotidyltransferase family. Mg(2+) serves as cofactor.

It is found in the cytoplasm. It catalyses the reaction RNA(n+1) + phosphate = RNA(n) + a ribonucleoside 5'-diphosphate. Its function is as follows. Involved in mRNA degradation. Catalyzes the phosphorolysis of single-stranded polyribonucleotides processively in the 3'- to 5'-direction. The protein is Polyribonucleotide nucleotidyltransferase of Lactococcus lactis subsp. lactis (strain IL1403) (Streptococcus lactis).